Reading from the N-terminus, the 343-residue chain is Serpentine receptor class alpha-11 (343 aa).

Residues 1–24 (MSSPDTPVCASPQQMEMYNSHFYT) are Extracellular-facing. A helical membrane pass occupies residues 25-45 (CALFFNLLIAFTSMTLIIMAI). Residues 46–60 (RKLLTESIINTSTRM) lie on the Cytoplasmic side of the membrane. The helical transmembrane segment at 61–81 (FLIVGLLCCSLHQTAYIVLRV) threads the bilayer. Residues 82 to 106 (QVIFQILFKLDQPCKLYYKAYDCKY) lie on the Extracellular side of the membrane. A helical transmembrane segment spans residues 107 to 127 (VTFSLVAGNTGMIFIQSAMTI). The Cytoplasmic portion of the chain corresponds to 128-146 (DRILTTVFTNLWPKLKYWP). The helical transmembrane segment at 147 to 167 (GVILSSFMIGCNFTNVQFIFW) threads the bilayer. At 168–192 (NDPLTDYVPTCGQFPPKSVGRFQKF) the chain is on the extracellular side. The chain crosses the membrane as a helical span at residues 193–213 (LEIALYMSLAHMVINVIILYI). Topologically, residues 214–247 (NVVQDRRQRLVSTHDQSQSFDVNQRFQSRVALKS) are cytoplasmic. A helical transmembrane segment spans residues 248 to 268 (TQAIFFLSMSQFLSCFLYTIF). The Extracellular portion of the chain corresponds to 269–291 (TKLYLTLQPDMTPLQSGLTLALT). A helical membrane pass occupies residues 292-312 (YTTPYACIAIPSLIMVTLTFI). At 313-343 (RNQRHRSINALRSQTETGDQYMQKIKKIWDK) the chain is on the cytoplasmic side.

The protein belongs to the nematode receptor-like protein sra family.

Its subcellular location is the membrane. Its function is as follows. A G protein-coupled receptor required for olfactory imprinting a requisite in ordorant response such as benzaldehyde and isoamylalcohol. This chain is Serpentine receptor class alpha-11, found in Caenorhabditis briggsae.